Here is a 210-residue protein sequence, read N- to C-terminus: Superoxide dismutase [Mn], mitochondrial (210 aa).

Mn(2+) contacts are provided by His-29, His-77, Asp-164, and His-168.

It belongs to the iron/manganese superoxide dismutase family. Homotetramer. The cofactor is Mn(2+).

The protein localises to the mitochondrion matrix. The catalysed reaction is 2 superoxide + 2 H(+) = H2O2 + O2. Destroys superoxide anion radicals which are normally produced within the cells and which are toxic to biological systems. The protein is Superoxide dismutase [Mn], mitochondrial (sodB) of Aspergillus niger.